We begin with the raw amino-acid sequence, 428 residues long: Histidine--tRNA ligase (428 aa).

Belongs to the class-II aminoacyl-tRNA synthetase family. As to quaternary structure, homodimer.

Its subcellular location is the cytoplasm. The enzyme catalyses tRNA(His) + L-histidine + ATP = L-histidyl-tRNA(His) + AMP + diphosphate + H(+). The protein is Histidine--tRNA ligase (hisS) of Chlamydia muridarum (strain MoPn / Nigg).